Here is a 273-residue protein sequence, read N- to C-terminus: Embryonic polyadenylate-binding protein 2 (273 aa).

The tract at residues 22–57 is disordered; that stretch reads SSDPEAQGWGAWGRTEKTSLVPRAGSRAGSDKEAEE. The RRM domain occupies 143 to 220; that stretch reads RSVFVGNVDY…RVIKVLPKRT (78 aa).

It is found in the cytoplasm. Its function is as follows. Binds the poly(A) tail of mRNA. The polypeptide is Embryonic polyadenylate-binding protein 2 (Pabpn1l) (Mus musculus (Mouse)).